The sequence spans 162 residues: NADPH-dependent 7-cyano-7-deazaguanine reductase (162 aa).

C53 serves as the catalytic Thioimide intermediate. D60 (proton donor) is an active-site residue. Residues 75–77 and 94–95 contribute to the substrate site; these read VES and HE.

Belongs to the GTP cyclohydrolase I family. QueF type 1 subfamily.

The protein localises to the cytoplasm. It catalyses the reaction 7-aminomethyl-7-carbaguanine + 2 NADP(+) = 7-cyano-7-deazaguanine + 2 NADPH + 3 H(+). The protein operates within tRNA modification; tRNA-queuosine biosynthesis. Catalyzes the NADPH-dependent reduction of 7-cyano-7-deazaguanine (preQ0) to 7-aminomethyl-7-deazaguanine (preQ1). The chain is NADPH-dependent 7-cyano-7-deazaguanine reductase from Exiguobacterium sibiricum (strain DSM 17290 / CCUG 55495 / CIP 109462 / JCM 13490 / 255-15).